A 284-amino-acid chain; its full sequence is D-tagatose-1,6-bisphosphate aldolase subunit GatY (284 aa).

D82 acts as the Proton donor in catalysis. Zn(2+) contacts are provided by H83 and H180. G181 provides a ligand contact to dihydroxyacetone phosphate. Residue H208 participates in Zn(2+) binding. Dihydroxyacetone phosphate contacts are provided by residues 209 to 211 (GAS) and 230 to 233 (NVAT).

Belongs to the class II fructose-bisphosphate aldolase family. TagBP aldolase GatY subfamily. Forms a complex with GatZ. The cofactor is Zn(2+).

It carries out the reaction D-tagatofuranose 1,6-bisphosphate = D-glyceraldehyde 3-phosphate + dihydroxyacetone phosphate. It participates in carbohydrate metabolism; D-tagatose 6-phosphate degradation; D-glyceraldehyde 3-phosphate and glycerone phosphate from D-tagatose 6-phosphate: step 2/2. Its function is as follows. Catalytic subunit of the tagatose-1,6-bisphosphate aldolase GatYZ, which catalyzes the reversible aldol condensation of dihydroxyacetone phosphate (DHAP or glycerone-phosphate) with glyceraldehyde 3-phosphate (G3P) to produce tagatose 1,6-bisphosphate (TBP). Requires GatZ subunit for full activity and stability. Is involved in the catabolism of galactitol. This is D-tagatose-1,6-bisphosphate aldolase subunit GatY from Shigella dysenteriae serotype 1 (strain Sd197).